The primary structure comprises 130 residues: uncharacterized protein (130 aa).

The disordered stretch occupies residues 41-64 (DDKDDHMDNQPKTSQTSKKVKLSE).

This is an uncharacterized protein from Streptococcus pyogenes serotype M6 (strain ATCC BAA-946 / MGAS10394).